Reading from the N-terminus, the 258-residue chain is Calcium release-activated calcium channel protein 1 (258 aa).

The Cytoplasmic portion of the chain corresponds to Met1–Arg63. A helical membrane pass occupies residues Thr64–Leu81. Over Glu82–Leu91 the chain is Extracellular. A helical transmembrane segment spans residues Leu92–Val112. Topologically, residues Ser113–Glu145 are cytoplasmic. A helical transmembrane segment spans residues Leu146–Leu166. The Extracellular segment spans residues Cys167–Ala192. A glycan (N-linked (GlcNAc...) asparagine) is linked at Asn182. Residues Ala193–Val213 form a helical membrane-spanning segment. Residues His214 to Ala258 are Cytoplasmic-facing.

It belongs to the Orai family.

It localises to the cell membrane. Ca(2+) release-activated Ca(2+) (CRAC) channel subunit which mediates Ca(2+) influx following depletion of intracellular Ca(2+) stores. The sequence is that of Calcium release-activated calcium channel protein 1 (orai1) from Xenopus laevis (African clawed frog).